Here is a 314-residue protein sequence, read N- to C-terminus: Aspartate carbamoyltransferase catalytic subunit (314 aa).

Carbamoyl phosphate is bound by residues Arg-55 and Thr-56. Lys-83 is an L-aspartate binding site. Residues Arg-105, His-134, and Gln-137 each contribute to the carbamoyl phosphate site. L-aspartate-binding residues include Arg-167 and Arg-221. Positions 262 and 263 each coordinate carbamoyl phosphate.

It belongs to the aspartate/ornithine carbamoyltransferase superfamily. ATCase family. In terms of assembly, heterododecamer (2C3:3R2) of six catalytic PyrB chains organized as two trimers (C3), and six regulatory PyrI chains organized as three dimers (R2).

The catalysed reaction is carbamoyl phosphate + L-aspartate = N-carbamoyl-L-aspartate + phosphate + H(+). It participates in pyrimidine metabolism; UMP biosynthesis via de novo pathway; (S)-dihydroorotate from bicarbonate: step 2/3. Functionally, catalyzes the condensation of carbamoyl phosphate and aspartate to form carbamoyl aspartate and inorganic phosphate, the committed step in the de novo pyrimidine nucleotide biosynthesis pathway. The sequence is that of Aspartate carbamoyltransferase catalytic subunit from Corynebacterium urealyticum (strain ATCC 43042 / DSM 7109).